The sequence spans 603 residues: UvrABC system protein C (603 aa).

The GIY-YIG domain occupies 14 to 92 (ELPGVYRMLD…IKSLAPRYNI (79 aa)). The UVR domain occupies 201-236 (QEVTRRLTKSMEEASAKLAFEQAAVFRDQIQSLHQV).

Belongs to the UvrC family. In terms of assembly, interacts with UvrB in an incision complex.

It localises to the cytoplasm. Its function is as follows. The UvrABC repair system catalyzes the recognition and processing of DNA lesions. UvrC both incises the 5' and 3' sides of the lesion. The N-terminal half is responsible for the 3' incision and the C-terminal half is responsible for the 5' incision. The protein is UvrABC system protein C of Dechloromonas aromatica (strain RCB).